A 1470-amino-acid polypeptide reads, in one-letter code: Histone acetyltransferase HAC4 (1470 aa).

Positions 1-10 are enriched in polar residues; it reads MNNNKEVPQN. 2 disordered regions span residues 1–20 and 342–376; these read MNNN…SSSA and TNFQ…HSQN. Residues 11-20 are compositionally biased toward low complexity; the sequence is SVAVSSSSSA. Residues 342–365 show a composition bias toward polar residues; it reads TNFQSAPNNRDNLPQVSQQLSNHG. The segment at 416-495 adopts a TAZ-type 1 zinc-finger fold; that stretch reads GQTSSNTVLR…SISCRTCVAV (80 aa). Positions 518–566 are disordered; the sequence is SSKCQPKKSSKSRQAYKKGGAEAPSVDADLQRSIKRPKLHRPSQNITPE. The span at 522–533 shows a compositional bias: basic residues; sequence QPKKSSKSRQAY. A PHD-type zinc finger spans residues 764–841; that stretch reads HYVCAPCYNE…KYTCPSCYIQ (78 aa). Residues 856–1293 form the CBP/p300-type HAT domain; that stretch reads VPGATSLPVT…ILYHLHNPTA (438 aa). Residues 979–981, 998–999, and tryptophan 1054 contribute to the acetyl-CoA site; these read LDS and RT. 2 consecutive ZZ-type zinc fingers follow at residues 1175–1238 and 1295–1347; these read HLQH…IKDV and AFAT…SSTD. The Zn(2+) site is built by cysteine 1180, cysteine 1183, cysteine 1195, cysteine 1198, cysteine 1204, cysteine 1207, histidine 1220, histidine 1228, cysteine 1300, cysteine 1303, cysteine 1315, cysteine 1318, cysteine 1324, cysteine 1327, histidine 1335, and histidine 1337. Residues 1358–1436 form a TAZ-type 2 zinc finger; sequence SQSYQVKLEK…KCTVPKCSGL (79 aa).

In terms of tissue distribution, rosette leaves, stems and flowers.

It is found in the nucleus. It carries out the reaction L-lysyl-[protein] + acetyl-CoA = N(6)-acetyl-L-lysyl-[protein] + CoA + H(+). In terms of biological role, acetyltransferase enzyme. Acetylates histones, giving a specific tag for transcriptional activation. The chain is Histone acetyltransferase HAC4 (HAC4) from Arabidopsis thaliana (Mouse-ear cress).